The primary structure comprises 265 residues: Novel plant SNARE 11 (265 aa).

At 1–215 (MDPISAVSEE…IGRQVATDKC (215 aa)) the chain is on the cytoplasmic side. Positions 30-75 (QKLEKIKDANRQSRQLEELTDKMRDCKSLIKDFDREIKSLESGNDA) form a coiled coil. The t-SNARE coiled-coil homology domain maps to 144–206 (NSMMDDTDQA…KKASKLVKEI (63 aa)). The helical; Anchor for type IV membrane protein transmembrane segment at 216–236 (IMAFLFLIVIGVIAIIIVKIV) threads the bilayer. Residues 237–265 (NPNNKDIRDIPGVGLAPPAMNRRLLWNHY) are Vesicular-facing.

The protein belongs to the novel plant SNARE family. In terms of assembly, interacts with KNOLLE to form a t-SNARE complex. Does not interact with SYP21, VTI12 or VPS45. Expressed in roots, stems, flower, siliques, expanding leaves, but not in mature leaves. Not limited to dividing cells.

The protein resides in the membrane. Functionally, t-SNARE involved in diverse vesicle trafficking and membrane fusion processes, including cell plate formation. The polypeptide is Novel plant SNARE 11 (NPSN11) (Arabidopsis thaliana (Mouse-ear cress)).